The sequence spans 130 residues: UPF0225 protein DR_0483 (130 aa).

Belongs to the UPF0225 family.

This chain is UPF0225 protein DR_0483, found in Deinococcus radiodurans (strain ATCC 13939 / DSM 20539 / JCM 16871 / CCUG 27074 / LMG 4051 / NBRC 15346 / NCIMB 9279 / VKM B-1422 / R1).